The primary structure comprises 175 residues: uncharacterized protein (175 aa).

Residues 143-166 (TCFLFCAFVTSIFIETDYSIFFLL) form a helical membrane-spanning segment.

The protein resides in the membrane. This is an uncharacterized protein from Saccharomyces cerevisiae (strain ATCC 204508 / S288c) (Baker's yeast).